A 373-amino-acid chain; its full sequence is Probable quinol oxidase subunit 2 (373 aa).

Positions 1 to 19 (MSKFKSLLLLFGSLILLSG) are cleaved as a signal peptide. The N-palmitoyl cysteine moiety is linked to residue C20. C20 carries the S-diacylglycerol cysteine lipid modification. 2 helical membrane-spanning segments follow: residues 38 to 58 (FLIM…LILF) and 82 to 102 (LETI…IPTV). Composition is skewed to basic and acidic residues over residues 292 to 320 (EERT…ERHG) and 339 to 373 (EESH…GGGH). Residues 292 to 373 (EERTADVLDK…KKDHENGGGH (82 aa)) form a disordered region.

It belongs to the cytochrome c oxidase subunit 2 family.

The protein resides in the cell membrane. It carries out the reaction 2 a quinol + O2 = 2 a quinone + 2 H2O. In terms of biological role, catalyzes quinol oxidation with the concomitant reduction of oxygen to water. Subunit II transfers the electrons from a quinol to the binuclear center of the catalytic subunit I. The chain is Probable quinol oxidase subunit 2 (qoxA) from Staphylococcus saprophyticus subsp. saprophyticus (strain ATCC 15305 / DSM 20229 / NCIMB 8711 / NCTC 7292 / S-41).